Here is a 132-residue protein sequence, read N- to C-terminus: Small ribosomal subunit protein uS8 (132 aa).

It belongs to the universal ribosomal protein uS8 family. In terms of assembly, part of the 30S ribosomal subunit. Contacts proteins S5 and S12.

One of the primary rRNA binding proteins, it binds directly to 16S rRNA central domain where it helps coordinate assembly of the platform of the 30S subunit. This is Small ribosomal subunit protein uS8 from Macrococcus caseolyticus (strain JCSC5402) (Macrococcoides caseolyticum).